Here is a 583-residue protein sequence, read N- to C-terminus: AP-1-like transcription factor YAP1 (583 aa).

Residues Met1–Leu86 form a disordered region. Basic and acidic residues predominate over residues Arg8–Ser17. A compositionally biased stretch (low complexity) spans Ser24–Ala36. Basic residues predominate over residues Ser37–Arg46. Positions Glu41–Pro48 match the Bipartite nuclear localization signal motif. 2 stretches are compositionally biased toward basic and acidic residues: residues Lys47–Thr58 and Ala67–Ser84. The bZIP domain occupies Thr51–Tyr114. Positions Lys54–Lys77 are basic motif. The segment at Leu79–Leu86 is leucine-zipper. The Bipartite nuclear localization signal motif lies at Lys120–Leu127. The segment covering Ser177 to Ile195 has biased composition (low complexity). The segment at Ser177–Lys233 is disordered. The span at Leu196 to Thr207 shows a compositional bias: polar residues. Low complexity predominate over residues Asn208–Ser230. The segment at Cys265–Cys272 is n-CRD. Intrachain disulfides connect Cys265/Cys531 and Cys272/Cys562. Disordered regions lie at residues Lys275–Ala329 and Gln350–Trp373. The segment covering Lys297–Ile312 has biased composition (low complexity). Residues Asp316–Ala329 are compositionally biased toward polar residues. The tract at residues Cys531–Cys562 is c-CRD. The Nuclear export signal motif lies at Leu547 to Leu554.

The protein belongs to the bZIP family. YAP subfamily. Oxidative stress induces conformational changes through oxidation of cysteine residues, masking the nuclear export signal, thus abolishing nuclear export by CRM1/exportin 1.

It is found in the nucleus. The protein localises to the cytoplasm. Transcription activator involved in oxidative stress response and cadmium resistance. Regulates the transcription of genes encoding antioxidant enzymes and components of the cellular thiol-reducing pathways. Activity of the transcription factor is controlled through oxidation of specific cysteine residues resulting in the alteration of its subcellular location. Activation by alkyl hydroperoxides or cadmium induces nuclear accumulation and as a result YAP1 transcriptional activity. The polypeptide is AP-1-like transcription factor YAP1 (YAP1) (Kluyveromyces lactis (strain ATCC 8585 / CBS 2359 / DSM 70799 / NBRC 1267 / NRRL Y-1140 / WM37) (Yeast)).